A 152-amino-acid polypeptide reads, in one-letter code: Deoxyuridine 5'-triphosphate nucleotidohydrolase (152 aa).

Substrate contacts are provided by residues 72–74, Asn-85, and 89–91; these read RSG and TID.

It belongs to the dUTPase family. Requires Mg(2+) as cofactor.

It catalyses the reaction dUTP + H2O = dUMP + diphosphate + H(+). It participates in pyrimidine metabolism; dUMP biosynthesis; dUMP from dCTP (dUTP route): step 2/2. Its function is as follows. This enzyme is involved in nucleotide metabolism: it produces dUMP, the immediate precursor of thymidine nucleotides and it decreases the intracellular concentration of dUTP so that uracil cannot be incorporated into DNA. The chain is Deoxyuridine 5'-triphosphate nucleotidohydrolase from Afipia carboxidovorans (strain ATCC 49405 / DSM 1227 / KCTC 32145 / OM5) (Oligotropha carboxidovorans).